The following is a 335-amino-acid chain: Holliday junction branch migration complex subunit RuvB (335 aa).

Residues 1-181 are large ATPase domain (RuvB-L); that stretch reads MSERVISPEP…FGLLIRLNLY (181 aa). ATP-binding positions include leucine 20, arginine 21, glycine 62, lysine 65, threonine 66, threonine 67, 128–130, arginine 171, tyrosine 181, and arginine 218; that span reads EDF. Threonine 66 provides a ligand contact to Mg(2+). Residues 182–252 form a small ATPAse domain (RuvB-S) region; it reads SPEDLEKIVT…IAGAGLALLQ (71 aa). The head domain (RuvB-H) stretch occupies residues 255–335; it reads ELGLDDIDRR…KLNHSQKTLF (81 aa). Positions 310 and 315 each coordinate DNA.

The protein belongs to the RuvB family. In terms of assembly, homohexamer. Forms an RuvA(8)-RuvB(12)-Holliday junction (HJ) complex. HJ DNA is sandwiched between 2 RuvA tetramers; dsDNA enters through RuvA and exits via RuvB. An RuvB hexamer assembles on each DNA strand where it exits the tetramer. Each RuvB hexamer is contacted by two RuvA subunits (via domain III) on 2 adjacent RuvB subunits; this complex drives branch migration. In the full resolvosome a probable DNA-RuvA(4)-RuvB(12)-RuvC(2) complex forms which resolves the HJ.

It is found in the cytoplasm. The catalysed reaction is ATP + H2O = ADP + phosphate + H(+). Functionally, the RuvA-RuvB-RuvC complex processes Holliday junction (HJ) DNA during genetic recombination and DNA repair, while the RuvA-RuvB complex plays an important role in the rescue of blocked DNA replication forks via replication fork reversal (RFR). RuvA specifically binds to HJ cruciform DNA, conferring on it an open structure. The RuvB hexamer acts as an ATP-dependent pump, pulling dsDNA into and through the RuvAB complex. RuvB forms 2 homohexamers on either side of HJ DNA bound by 1 or 2 RuvA tetramers; 4 subunits per hexamer contact DNA at a time. Coordinated motions by a converter formed by DNA-disengaged RuvB subunits stimulates ATP hydrolysis and nucleotide exchange. Immobilization of the converter enables RuvB to convert the ATP-contained energy into a lever motion, pulling 2 nucleotides of DNA out of the RuvA tetramer per ATP hydrolyzed, thus driving DNA branch migration. The RuvB motors rotate together with the DNA substrate, which together with the progressing nucleotide cycle form the mechanistic basis for DNA recombination by continuous HJ branch migration. Branch migration allows RuvC to scan DNA until it finds its consensus sequence, where it cleaves and resolves cruciform DNA. The chain is Holliday junction branch migration complex subunit RuvB from Methanoregula boonei (strain DSM 21154 / JCM 14090 / 6A8).